We begin with the raw amino-acid sequence, 251 residues long: Hydroxyacylglutathione hydrolase (251 aa).

Zn(2+) contacts are provided by His53, His55, Asp57, His58, His109, Asp126, and His164.

Belongs to the metallo-beta-lactamase superfamily. Glyoxalase II family. As to quaternary structure, monomer. It depends on Zn(2+) as a cofactor.

The catalysed reaction is an S-(2-hydroxyacyl)glutathione + H2O = a 2-hydroxy carboxylate + glutathione + H(+). The protein operates within secondary metabolite metabolism; methylglyoxal degradation; (R)-lactate from methylglyoxal: step 2/2. Functionally, thiolesterase that catalyzes the hydrolysis of S-D-lactoyl-glutathione to form glutathione and D-lactic acid. In Wigglesworthia glossinidia brevipalpis, this protein is Hydroxyacylglutathione hydrolase.